The primary structure comprises 190 residues: Probable chorismate pyruvate-lyase (190 aa).

Substrate-binding residues include arginine 77, leucine 115, and glutamate 174.

It belongs to the UbiC family.

The protein resides in the cytoplasm. It catalyses the reaction chorismate = 4-hydroxybenzoate + pyruvate. Its pathway is cofactor biosynthesis; ubiquinone biosynthesis. Removes the pyruvyl group from chorismate, with concomitant aromatization of the ring, to provide 4-hydroxybenzoate (4HB) for the ubiquinone pathway. In Shewanella sp. (strain MR-4), this protein is Probable chorismate pyruvate-lyase.